We begin with the raw amino-acid sequence, 428 residues long: 26S proteasome regulatory subunit 7 (428 aa).

211 to 218 (GPPGTGKT) serves as a coordination point for ATP.

Belongs to the AAA ATPase family.

It localises to the cytoplasm. It is found in the nucleus. In terms of biological role, the 26S proteasome is involved in the ATP-dependent degradation of ubiquitinated proteins. The regulatory (or ATPase) complex confers ATP dependency and substrate specificity to the 26S complex. The polypeptide is 26S proteasome regulatory subunit 7 (psmC2) (Dictyostelium discoideum (Social amoeba)).